A 387-amino-acid chain; its full sequence is Putative serine/threonine-protein kinase (387 aa).

The 330-residue stretch at 15–344 (YQIEKLLNRG…ERVLEGQVEI (330 aa)) folds into the Protein kinase domain. ATP is bound by residues 21 to 29 (LNRGGMDSY) and Lys55. The active-site Proton acceptor is the Asp164. A run of 2 helical transmembrane segments spans residues 232 to 252 (PPNA…MLVG) and 363 to 383 (SIFT…LLIF).

It belongs to the protein kinase superfamily. Ser/Thr protein kinase family.

The protein resides in the cell membrane. It carries out the reaction L-seryl-[protein] + ATP = O-phospho-L-seryl-[protein] + ADP + H(+). The catalysed reaction is L-threonyl-[protein] + ATP = O-phospho-L-threonyl-[protein] + ADP + H(+). This is Putative serine/threonine-protein kinase from Mycoplasma genitalium (strain ATCC 33530 / DSM 19775 / NCTC 10195 / G37) (Mycoplasmoides genitalium).